Here is a 484-residue protein sequence, read N- to C-terminus: Aspartyl/glutamyl-tRNA(Asn/Gln) amidotransferase subunit B (484 aa).

This sequence belongs to the GatB/GatE family. GatB subfamily. As to quaternary structure, heterotrimer of A, B and C subunits.

It catalyses the reaction L-glutamyl-tRNA(Gln) + L-glutamine + ATP + H2O = L-glutaminyl-tRNA(Gln) + L-glutamate + ADP + phosphate + H(+). The enzyme catalyses L-aspartyl-tRNA(Asn) + L-glutamine + ATP + H2O = L-asparaginyl-tRNA(Asn) + L-glutamate + ADP + phosphate + 2 H(+). Allows the formation of correctly charged Asn-tRNA(Asn) or Gln-tRNA(Gln) through the transamidation of misacylated Asp-tRNA(Asn) or Glu-tRNA(Gln) in organisms which lack either or both of asparaginyl-tRNA or glutaminyl-tRNA synthetases. The reaction takes place in the presence of glutamine and ATP through an activated phospho-Asp-tRNA(Asn) or phospho-Glu-tRNA(Gln). In Dechloromonas aromatica (strain RCB), this protein is Aspartyl/glutamyl-tRNA(Asn/Gln) amidotransferase subunit B.